Consider the following 406-residue polypeptide: Succinylornithine transaminase (406 aa).

N6-(pyridoxal phosphate)lysine is present on lysine 252.

Belongs to the class-III pyridoxal-phosphate-dependent aminotransferase family. AstC subfamily. It depends on pyridoxal 5'-phosphate as a cofactor.

The enzyme catalyses N(2)-succinyl-L-ornithine + 2-oxoglutarate = N-succinyl-L-glutamate 5-semialdehyde + L-glutamate. It functions in the pathway amino-acid degradation; L-arginine degradation via AST pathway; L-glutamate and succinate from L-arginine: step 3/5. In terms of biological role, catalyzes the transamination of N(2)-succinylornithine and alpha-ketoglutarate into N(2)-succinylglutamate semialdehyde and glutamate. Can also act as an acetylornithine aminotransferase. This Escherichia coli O157:H7 protein is Succinylornithine transaminase.